Reading from the N-terminus, the 672-residue chain is Zinc finger protein 271 (672 aa).

The segment at 1–29 (MEIQFNYESQEHHLLSDGENKTKIGKPAS) is disordered. Residues 9–22 (SQEHHLLSDGENKT) are compositionally biased toward basic and acidic residues. The C2H2-type 1; degenerate zinc-finger motif lies at 80-102 (HNCDEYGQSFVWNTGLFRHRKTH). 19 consecutive C2H2-type zinc fingers follow at residues 107 to 129 (YECD…QRIH), 135 to 157 (YSCN…QRVH), 163 to 185 (YKCD…QRIH), 191 to 213 (YQCS…QRIH), 219 to 241 (YTCN…QRIH), 247 to 269 (YKCD…QRIH), 275 to 297 (YPCN…RRIH), 303 to 325 (YKCN…QRIH), 331 to 353 (YPCD…QRIH), 359 to 381 (YPCN…HRIH), 387 to 409 (YECD…QRIH), 415 to 437 (YPCS…QRIH), 443 to 465 (YACN…QRVH), 471 to 493 (YHCN…QRIH), 499 to 521 (YLCT…QRIH), 527 to 549 (YKCS…QRIH), 555 to 577 (NPCN…QKIH), 583 to 605 (YKCD…QKIH), and 611 to 633 (YRCV…EEVH).

Belongs to the krueppel C2H2-type zinc-finger protein family.

The protein resides in the nucleus. Its function is as follows. May be involved in transcriptional regulation. The polypeptide is Zinc finger protein 271 (ZNF271) (Pongo abelii (Sumatran orangutan)).